The sequence spans 902 residues: Protein translocase subunit SecA (902 aa).

ATP-binding positions include Q87, 105 to 109 (GEGKT), and D512. Residues 851–902 (LARQQQLSHQAPVEELTQGSAAAAQEGRKVGRNDPCPCGSGKKFKHCHGKLQ) are disordered. Positions 886, 888, 897, and 898 each coordinate Zn(2+). Positions 892 to 902 (KKFKHCHGKLQ) are enriched in basic residues.

The protein belongs to the SecA family. In terms of assembly, monomer and homodimer. Part of the essential Sec protein translocation apparatus which comprises SecA, SecYEG and auxiliary proteins SecDF-YajC and YidC. The cofactor is Zn(2+).

It is found in the cell inner membrane. It localises to the cytoplasm. It catalyses the reaction ATP + H2O + cellular proteinSide 1 = ADP + phosphate + cellular proteinSide 2.. Functionally, part of the Sec protein translocase complex. Interacts with the SecYEG preprotein conducting channel. Has a central role in coupling the hydrolysis of ATP to the transfer of proteins into and across the cell membrane, serving both as a receptor for the preprotein-SecB complex and as an ATP-driven molecular motor driving the stepwise translocation of polypeptide chains across the membrane. The polypeptide is Protein translocase subunit SecA (Sodalis glossinidius (strain morsitans)).